Here is a 667-residue protein sequence, read N- to C-terminus: MNEIEQRIAELNKLLHEYGYAYYVLDKPVVADSVYDQLLHELIALEEANPSLIFPDSPTQRVGGTVVEGFKKVTHDYPMLSLSNAFNEADLQEFDRKVRQAIGDHFSYVCELKIDGLAISLKYENGVFVQGATRGDGVVGEEITANLKTIHAIPLRLKEPITIEVRGEAYMPKKSFEKLNAQRADNGEELFANPRNAAAGSLRQLDPKIAASRQLSTFIYAIGGDGEIYGIDGHAEMLDYLEDLGFPSNKERQRCSTIEEVMAFIEHWTENRPHLAYEIDGIVIKVDRYAQQDELGYTAKSPRWAIAYKFPAEEVVTTLLDIDLTVGRTGVVTPTAILTPVQVAGTTVQRASLHNEDLIRDKDIRLGDTVIIRKAGDIIPQVVGVLIEQRPENSVPFEMPKNCPVCDSELIRIEGEVALRCVNPACFAQIAESIKYFVSRNAMNIDGLGDKVVEQLLRADLIHDVSDLYHLTIEQLVELERMGEKSATNLVNAIQASKENSMERLLIGLGIRHVGEKAAKIVSEQFGSMEAVMAATEEQLVAIYEIGDKMASSLVEYFSNDDARAVIERLAEVGVNMTFKGKKVEVVVGDNPFAGKTIVLTGKLEQLTRNEAKAKIEELGGTVTGSVSKKTDLVIAGEDAGSKLAKAEQLGIEVWNEDNLIEQLNLI.

Residues 32–36 (DSVYD), 81–82 (SL), and E111 each bind NAD(+). K113 functions as the N6-AMP-lysine intermediate in the catalytic mechanism. R134, E168, K285, and K309 together coordinate NAD(+). Residues C403, C406, C421, and C426 each coordinate Zn(2+). The BRCT domain maps to 588 to 667 (VGDNPFAGKT…DNLIEQLNLI (80 aa)).

Belongs to the NAD-dependent DNA ligase family. LigA subfamily. Requires Mg(2+) as cofactor. It depends on Mn(2+) as a cofactor.

It catalyses the reaction NAD(+) + (deoxyribonucleotide)n-3'-hydroxyl + 5'-phospho-(deoxyribonucleotide)m = (deoxyribonucleotide)n+m + AMP + beta-nicotinamide D-nucleotide.. Functionally, DNA ligase that catalyzes the formation of phosphodiester linkages between 5'-phosphoryl and 3'-hydroxyl groups in double-stranded DNA using NAD as a coenzyme and as the energy source for the reaction. It is essential for DNA replication and repair of damaged DNA. The polypeptide is DNA ligase (Lysinibacillus sphaericus (strain C3-41)).